The following is a 468-amino-acid chain: 3-isopropylmalate dehydratase large subunit (468 aa).

[4Fe-4S] cluster contacts are provided by Cys-347, Cys-407, and Cys-410.

This sequence belongs to the aconitase/IPM isomerase family. LeuC type 1 subfamily. In terms of assembly, heterodimer of LeuC and LeuD. [4Fe-4S] cluster serves as cofactor.

The enzyme catalyses (2R,3S)-3-isopropylmalate = (2S)-2-isopropylmalate. It participates in amino-acid biosynthesis; L-leucine biosynthesis; L-leucine from 3-methyl-2-oxobutanoate: step 2/4. Functionally, catalyzes the isomerization between 2-isopropylmalate and 3-isopropylmalate, via the formation of 2-isopropylmaleate. The protein is 3-isopropylmalate dehydratase large subunit of Synechococcus sp. (strain CC9311).